The sequence spans 296 residues: 4-hydroxy-tetrahydrodipicolinate synthase (296 aa).

A pyruvate-binding site is contributed by Thr49. Tyr137 functions as the Proton donor/acceptor in the catalytic mechanism. Lys166 acts as the Schiff-base intermediate with substrate in catalysis. Ile208 contacts pyruvate.

The protein belongs to the DapA family. As to quaternary structure, homotetramer; dimer of dimers.

Its subcellular location is the cytoplasm. The catalysed reaction is L-aspartate 4-semialdehyde + pyruvate = (2S,4S)-4-hydroxy-2,3,4,5-tetrahydrodipicolinate + H2O + H(+). It participates in amino-acid biosynthesis; L-lysine biosynthesis via DAP pathway; (S)-tetrahydrodipicolinate from L-aspartate: step 3/4. Functionally, catalyzes the condensation of (S)-aspartate-beta-semialdehyde [(S)-ASA] and pyruvate to 4-hydroxy-tetrahydrodipicolinate (HTPA). This is 4-hydroxy-tetrahydrodipicolinate synthase from Azobacteroides pseudotrichonymphae genomovar. CFP2.